The following is a 67-amino-acid chain: Large ribosomal subunit protein bL35 (67 aa).

The protein belongs to the bacterial ribosomal protein bL35 family.

The polypeptide is Large ribosomal subunit protein bL35 (Sphingopyxis alaskensis (strain DSM 13593 / LMG 18877 / RB2256) (Sphingomonas alaskensis)).